The following is a 387-amino-acid chain: MKIRETGTRQQHNLRRARIGCVILKKNVTFTMGIRFSRWLVGCGVAIAFGVLSPSVTWANPQLNALLEQGNEQLTNRNFAQAVQHYRQALTLEANNARIHGALGYALSQLGNYSEAVTAYRRATELEDDNAEFFNALGFNLAQSGDNRSAINAYQRATQLQPNNLAYSLGLATVQFRAGDYDQALVAYRKVLAKDSNNTMALQNSLTSLLQLGRNQEAAVLFPDLLRQRPNDAELRIKAAVTWFGLNDRDQAIAFLEEARRLSTRDSAMQIRVGKIYETQNLLPQAIAAYEQASFVDPQSREAFALYGSAAMKTEDYINAIIAYRALTELSPTDPAAFYNFAVALQGRRRSREALEALEMARDLYQQRGDRRGVNITESLMAAIEEG.

9 TPR repeats span residues 63-96 (LNAL…EANN), 97-130 (ARIH…EDDN), 132-164 (EFFN…QPNN), 166-198 (AYSL…DSNN), 200-232 (MALQ…RPND), 233-266 (AELR…STRD), 267-300 (SAMQ…DPQS), 302-334 (EAFA…SPTD), and 336-368 (AAFY…YQQR).

The polypeptide is TPR repeat-containing protein SYNPCC7002_A0425 (Picosynechococcus sp. (strain ATCC 27264 / PCC 7002 / PR-6) (Agmenellum quadruplicatum)).